The primary structure comprises 392 residues: Queuine tRNA-ribosyltransferase (392 aa).

Residue aspartate 93 is the Proton acceptor of the active site. Residues 93-97 (DSGGY), aspartate 147, glutamine 189, and glycine 216 contribute to the substrate site. Positions 247-253 (GVGAPED) are RNA binding. The active-site Nucleophile is aspartate 266. Residues 271–275 (TRVAR) form an RNA binding; important for wobble base 34 recognition region. Residues cysteine 304, cysteine 306, cysteine 309, and histidine 335 each contribute to the Zn(2+) site.

This sequence belongs to the queuine tRNA-ribosyltransferase family. Homodimer. Within each dimer, one monomer is responsible for RNA recognition and catalysis, while the other monomer binds to the replacement base PreQ1. Zn(2+) is required as a cofactor.

It carries out the reaction 7-aminomethyl-7-carbaguanine + guanosine(34) in tRNA = 7-aminomethyl-7-carbaguanosine(34) in tRNA + guanine. Its pathway is tRNA modification; tRNA-queuosine biosynthesis. Catalyzes the base-exchange of a guanine (G) residue with the queuine precursor 7-aminomethyl-7-deazaguanine (PreQ1) at position 34 (anticodon wobble position) in tRNAs with GU(N) anticodons (tRNA-Asp, -Asn, -His and -Tyr). Catalysis occurs through a double-displacement mechanism. The nucleophile active site attacks the C1' of nucleotide 34 to detach the guanine base from the RNA, forming a covalent enzyme-RNA intermediate. The proton acceptor active site deprotonates the incoming PreQ1, allowing a nucleophilic attack on the C1' of the ribose to form the product. After dissociation, two additional enzymatic reactions on the tRNA convert PreQ1 to queuine (Q), resulting in the hypermodified nucleoside queuosine (7-(((4,5-cis-dihydroxy-2-cyclopenten-1-yl)amino)methyl)-7-deazaguanosine). This chain is Queuine tRNA-ribosyltransferase, found in Dehalococcoides mccartyi (strain ATCC BAA-2266 / KCTC 15142 / 195) (Dehalococcoides ethenogenes (strain 195)).